The chain runs to 558 residues: Eukaryotic translation initiation factor 3 subunit D (558 aa).

The tract at residues 296-310 (EFDLLTVNETSVEPP) is RNA gate. The interval 534–558 (DNTFESEGEEEDSDEEEQVKDAFQR) is disordered. Over residues 537–551 (FESEGEEEDSDEEEQ) the composition is skewed to acidic residues.

Belongs to the eIF-3 subunit D family. In terms of assembly, component of the eukaryotic translation initiation factor 3 (eIF-3) complex.

Its subcellular location is the cytoplasm. MRNA cap-binding component of the eukaryotic translation initiation factor 3 (eIF-3) complex, which is involved in protein synthesis of a specialized repertoire of mRNAs and, together with other initiation factors, stimulates binding of mRNA and methionyl-tRNAi to the 40S ribosome. The eIF-3 complex specifically targets and initiates translation of a subset of mRNAs involved in cell proliferation. In the eIF-3 complex, eif3d specifically recognizes and binds the 7-methylguanosine cap of a subset of mRNAs. This is Eukaryotic translation initiation factor 3 subunit D from Nasonia vitripennis (Parasitic wasp).